Here is a 336-residue protein sequence, read N- to C-terminus: Large ribosomal subunit protein uL10 (336 aa).

Residues 292–336 form a disordered region; that stretch reads LKEKLSSRAAAPAPEEKEEEVEEEAEEEEEEEEEDAAAGLGALFG. A compositionally biased stretch (acidic residues) spans 307–327; that stretch reads EKEEEVEEEAEEEEEEEEEDA.

Belongs to the universal ribosomal protein uL10 family. In terms of assembly, part of the 50S ribosomal subunit. Forms part of the ribosomal stalk which helps the ribosome interact with GTP-bound translation factors. Forms a heptameric L10(L12)2(L12)2(L12)2 complex, where L10 forms an elongated spine to which the L12 dimers bind in a sequential fashion.

Forms part of the ribosomal stalk, playing a central role in the interaction of the ribosome with GTP-bound translation factors. This chain is Large ribosomal subunit protein uL10, found in Methanothermobacter thermautotrophicus (strain ATCC 29096 / DSM 1053 / JCM 10044 / NBRC 100330 / Delta H) (Methanobacterium thermoautotrophicum).